We begin with the raw amino-acid sequence, 262 residues long: Thiazole synthase (262 aa).

K97 serves as the catalytic Schiff-base intermediate with DXP. Residues G158, 185-186 (AG), and 207-208 (NT) each bind 1-deoxy-D-xylulose 5-phosphate. Residues 243-262 (DKAQASTPTVGQPFWHSAEY) form a disordered region.

This sequence belongs to the ThiG family. In terms of assembly, homotetramer. Forms heterodimers with either ThiH or ThiS.

The protein localises to the cytoplasm. The catalysed reaction is [ThiS sulfur-carrier protein]-C-terminal-Gly-aminoethanethioate + 2-iminoacetate + 1-deoxy-D-xylulose 5-phosphate = [ThiS sulfur-carrier protein]-C-terminal Gly-Gly + 2-[(2R,5Z)-2-carboxy-4-methylthiazol-5(2H)-ylidene]ethyl phosphate + 2 H2O + H(+). Its pathway is cofactor biosynthesis; thiamine diphosphate biosynthesis. Functionally, catalyzes the rearrangement of 1-deoxy-D-xylulose 5-phosphate (DXP) to produce the thiazole phosphate moiety of thiamine. Sulfur is provided by the thiocarboxylate moiety of the carrier protein ThiS. In vitro, sulfur can be provided by H(2)S. In Neisseria meningitidis serogroup C (strain 053442), this protein is Thiazole synthase.